We begin with the raw amino-acid sequence, 346 residues long: Histidinol-phosphate aminotransferase (346 aa).

Residue Lys-209 is modified to N6-(pyridoxal phosphate)lysine.

This sequence belongs to the class-II pyridoxal-phosphate-dependent aminotransferase family. Histidinol-phosphate aminotransferase subfamily. Homodimer. The cofactor is pyridoxal 5'-phosphate.

The catalysed reaction is L-histidinol phosphate + 2-oxoglutarate = 3-(imidazol-4-yl)-2-oxopropyl phosphate + L-glutamate. The protein operates within amino-acid biosynthesis; L-histidine biosynthesis; L-histidine from 5-phospho-alpha-D-ribose 1-diphosphate: step 7/9. This Vibrio parahaemolyticus serotype O3:K6 (strain RIMD 2210633) protein is Histidinol-phosphate aminotransferase.